Consider the following 488-residue polypeptide: Beta-xylosidase (488 aa).

Residue E163 is the Proton donor of the active site. E275 acts as the Nucleophile in catalysis.

This sequence belongs to the glycosyl hydrolase 39 family.

It catalyses the reaction Hydrolysis of (1-&gt;4)-beta-D-xylans, to remove successive D-xylose residues from the non-reducing termini.. In terms of biological role, beta-xylosidase is an intracellular xylan-degrading enzyme. The sequence is that of Beta-xylosidase (xynB) from Caldicellulosiruptor saccharolyticus (Caldocellum saccharolyticum).